The chain runs to 102 residues: Small ribosomal subunit protein uS10 (102 aa).

The interval 34–58 (LSGPVPLPTKTLEIPARKSPDGEGT) is disordered.

This sequence belongs to the universal ribosomal protein uS10 family. As to quaternary structure, part of the 30S ribosomal subunit.

Functionally, involved in the binding of tRNA to the ribosomes. This is Small ribosomal subunit protein uS10 from Natronomonas pharaonis (strain ATCC 35678 / DSM 2160 / CIP 103997 / JCM 8858 / NBRC 14720 / NCIMB 2260 / Gabara) (Halobacterium pharaonis).